Reading from the N-terminus, the 484-residue chain is Poly(A) RNA polymerase GLD2 (484 aa).

Serine 62 and serine 69 each carry phosphoserine. Residues 72-97 (FRGRKRLSDEKNLPLDGKRQRFHSPH) form a disordered region. Residues 76 to 92 (KRLSDEKNLPLDGKRQR) carry the Nuclear localization signal motif. Residues 77-90 (RLSDEKNLPLDGKR) show a composition bias toward basic and acidic residues. Serine 95 bears the Phosphoserine mark. Mg(2+)-binding residues include aspartate 213 and aspartate 215. The PAP-associated domain occupies 386 to 440 (NLGDLLLGFLKYYATEFDWNSQMISVREAKAIPRPDGIEWRNKYICVEEPFDGTN).

The protein belongs to the DNA polymerase type-B-like family. GLD2 subfamily. Interacts with CPEB1, CPEB2, CPSF1 and PABPC1. Interacts with QKI isoform QKI7; promoting recruitment to miRNA miR-122 and miR-122 stabilization. Requires Mg(2+) as cofactor. It depends on Mn(2+) as a cofactor. As to expression, expressed in brain. Within brain, it is expressed in cerebellum, hippocampus and medulla.

The protein resides in the cytoplasm. It is found in the nucleus. It carries out the reaction RNA(n) + ATP = RNA(n)-3'-adenine ribonucleotide + diphosphate. Its function is as follows. Cytoplasmic poly(A) RNA polymerase that adds successive AMP monomers to the 3'-end of specific RNAs, forming a poly(A) tail. In contrast to the canonical nuclear poly(A) RNA polymerase, it only adds poly(A) to selected cytoplasmic mRNAs. Does not play a role in replication-dependent histone mRNA degradation. Adds a single nucleotide to the 3' end of specific miRNAs, monoadenylation stabilizes and prolongs the activity of some but not all miRNAs. In Homo sapiens (Human), this protein is Poly(A) RNA polymerase GLD2.